The chain runs to 262 residues: Hydroxyethylthiazole kinase (262 aa).

Substrate is bound at residue Met43. Positions 118 and 164 each coordinate ATP. Ala191 is a binding site for substrate.

It belongs to the Thz kinase family. Mg(2+) serves as cofactor.

It carries out the reaction 5-(2-hydroxyethyl)-4-methylthiazole + ATP = 4-methyl-5-(2-phosphooxyethyl)-thiazole + ADP + H(+). It functions in the pathway cofactor biosynthesis; thiamine diphosphate biosynthesis; 4-methyl-5-(2-phosphoethyl)-thiazole from 5-(2-hydroxyethyl)-4-methylthiazole: step 1/1. Its function is as follows. Catalyzes the phosphorylation of the hydroxyl group of 4-methyl-5-beta-hydroxyethylthiazole (THZ). This is Hydroxyethylthiazole kinase from Cereibacter sphaeroides (strain ATCC 17029 / ATH 2.4.9) (Rhodobacter sphaeroides).